We begin with the raw amino-acid sequence, 253 residues long: POU Class 2 homeobox-associating factor 3 (253 aa).

The 23-residue stretch at 5–27 (PKVYQGVRVKMTVKELLQQRRAH) folds into the OCA domain.

It belongs to the POU2AF family. In terms of assembly, interacts with POU2F3 in a DNA-dependent manner; this interaction increases POU2F3 transactivation activity. Expressed in tuft cells.

The protein resides in the cytoplasm. It is found in the nucleus. In terms of biological role, transcriptional coactivator that specifically associates with POU2F3. This complex drives the development of tuft cells, a rare a rare chemosensory cells that coordinate immune and neural functions within mucosal epithelial tissues. In Mus musculus (Mouse), this protein is POU Class 2 homeobox-associating factor 3.